We begin with the raw amino-acid sequence, 325 residues long: Psp operon transcriptional activator (325 aa).

The region spanning 15–237 (FLEVLEQVSH…ELKNVVERSV (223 aa)) is the Sigma-54 factor interaction domain. ATP contacts are provided by residues 36–43 (GERGTGKE) and 99–108 (ADGGTLFLDE). Positions 302 to 321 (QKRAAELLGLTYHQFRALLK) form a DNA-binding region, H-T-H motif.

In terms of assembly, forms a complex with PspA, which is composed of around 6 PspF subunits and 6 PspA subunits.

The protein resides in the cytoplasm. Its activity is regulated as follows. ATPase activity is inhibited by interaction with PspA. Under inducing conditions, the interaction is disrupted, allowing activation of psp transcription. Functionally, transcriptional activator for the phage shock protein (psp) operon (pspABCDE) and pspG gene. The chain is Psp operon transcriptional activator (pspF) from Escherichia coli (strain K12).